Reading from the N-terminus, the 296-residue chain is uncharacterized protein (296 aa).

One can recognise an HTH lysR-type domain in the interval 1-60 (MDPKISYFQTFIVASKTKSFSKAAKRLGITQGTVSNHISALEKYFDAQLFLRTPEGVDLT). A DNA-binding region (H-T-H motif) is located at residues 20–39 (FSKAAKRLGITQGTVSNHIS).

The protein belongs to the LysR transcriptional regulatory family.

This is an uncharacterized protein from Methanocaldococcus jannaschii (strain ATCC 43067 / DSM 2661 / JAL-1 / JCM 10045 / NBRC 100440) (Methanococcus jannaschii).